Here is a 133-residue protein sequence, read N- to C-terminus: Ribosome-binding factor A (133 aa).

It belongs to the RbfA family. As to quaternary structure, monomer. Binds 30S ribosomal subunits, but not 50S ribosomal subunits or 70S ribosomes.

It is found in the cytoplasm. One of several proteins that assist in the late maturation steps of the functional core of the 30S ribosomal subunit. Associates with free 30S ribosomal subunits (but not with 30S subunits that are part of 70S ribosomes or polysomes). Required for efficient processing of 16S rRNA. May interact with the 5'-terminal helix region of 16S rRNA. This Proteus mirabilis (strain HI4320) protein is Ribosome-binding factor A.